The sequence spans 425 residues: Aromatic prenyl transferase PC-22 (425 aa).

Residues 83 to 84 (GI) and glutamate 92 contribute to the L-tryptophan site. Residues arginine 107, lysine 198, tyrosine 200, arginine 265, lysine 267, tyrosine 269, tyrosine 345, tyrosine 410, and tyrosine 414 each contribute to the substrate site.

The protein belongs to the tryptophan dimethylallyltransferase family. Homodimer.

It participates in secondary metabolite biosynthesis. Its function is as follows. Aromatic prenyl transferase; part of the gene cluster that mediates the biosynthesis of the indole diterpenes penitrems. The geranylgeranyl diphosphate (GGPP) synthase penG catalyzes the first step in penitrem biosynthesis via conversion of farnesyl pyrophosphate and isopentyl pyrophosphate into geranylgeranyl pyrophosphate (GGPP). Condensation of indole-3-glycerol phosphate with GGPP by the prenyl transferase penC then forms 3-geranylgeranylindole (3-GGI). Epoxidation by the FAD-dependent monooxygenase penM leads to a epoxidized-GGI that is substrate of the terpene cyclase penB for cyclization to yield paspaline. Paspaline is subsequently converted to 13-desoxypaxilline by the cytochrome P450 monooxygenase penP, the latter being then converted to paxilline by the cytochrome P450 monooxygenase penQ. Paxilline is converted to beta-paxitriol via C-10 ketoreduction by the short-chain dehydrogenase PC-15 which can be monoprenylated at the C-20 by the indole diterpene prenyltransferase penD. A two-step elimination (acetylation and elimination) process performed by the O-acetyltransferase PC-16 and the P.simplicissimum ptmI-ortholog not yet identified in P.crustosum, leads to the production of the prenylated form of penijanthine. The FAD-linked oxidoreductase ptmO then converts the prenylated form of penijanthine into PC-M5 which is in turn transformed into PC-M4 by the aromatic dimethylallyltransferase PC-22. A series of oxidation steps involving 4 cytochrome P450 monooxygenases (PC-21, PC-05, PC-23, PC-20) and a FAD-dependent monooxygenase (PC-14) are required for the transformation of PC-M4 to penitrems A and E. Synthesis of these final products is proposed to proceed via penitrems D and C (PC-21, PC-05, PC-14) and penitrems B and F (PC-21, PC-05, PC-14, PC-23). In Penicillium crustosum (Blue mold fungus), this protein is Aromatic prenyl transferase PC-22.